Reading from the N-terminus, the 227-residue chain is Phosphoribosylformylglycinamidine synthase subunit PurQ (227 aa).

One can recognise a Glutamine amidotransferase type-1 domain in the interval 2-227 (RWAIVRFPGA…FLGLVKEVAR (226 aa)). Cys-85 functions as the Nucleophile in the catalytic mechanism. Residues His-200 and Glu-202 contribute to the active site.

As to quaternary structure, part of the FGAM synthase complex composed of 1 PurL, 1 PurQ and 2 PurS subunits.

The protein resides in the cytoplasm. It carries out the reaction N(2)-formyl-N(1)-(5-phospho-beta-D-ribosyl)glycinamide + L-glutamine + ATP + H2O = 2-formamido-N(1)-(5-O-phospho-beta-D-ribosyl)acetamidine + L-glutamate + ADP + phosphate + H(+). The enzyme catalyses L-glutamine + H2O = L-glutamate + NH4(+). The protein operates within purine metabolism; IMP biosynthesis via de novo pathway; 5-amino-1-(5-phospho-D-ribosyl)imidazole from N(2)-formyl-N(1)-(5-phospho-D-ribosyl)glycinamide: step 1/2. In terms of biological role, part of the phosphoribosylformylglycinamidine synthase complex involved in the purines biosynthetic pathway. Catalyzes the ATP-dependent conversion of formylglycinamide ribonucleotide (FGAR) and glutamine to yield formylglycinamidine ribonucleotide (FGAM) and glutamate. The FGAM synthase complex is composed of three subunits. PurQ produces an ammonia molecule by converting glutamine to glutamate. PurL transfers the ammonia molecule to FGAR to form FGAM in an ATP-dependent manner. PurS interacts with PurQ and PurL and is thought to assist in the transfer of the ammonia molecule from PurQ to PurL. This is Phosphoribosylformylglycinamidine synthase subunit PurQ from Thermus thermophilus (strain ATCC 27634 / DSM 579 / HB8).